A 186-amino-acid chain; its full sequence is Photosystem I assembly protein Ycf4 (186 aa).

Transmembrane regions (helical) follow at residues 22–42 (FCWA…GTSS) and 57–77 (IIFF…LFIS).

Belongs to the Ycf4 family.

The protein resides in the plastid. Its subcellular location is the chloroplast thylakoid membrane. Seems to be required for the assembly of the photosystem I complex. This Vitis vinifera (Grape) protein is Photosystem I assembly protein Ycf4.